Reading from the N-terminus, the 400-residue chain is 3-phenylpropionate/cinnamic acid dioxygenase ferredoxin--NAD(+) reductase component (400 aa).

Position 5–36 (5–36 (TIIIVGGGQAAAMAAASLRQQGFTGELHLFSD)) interacts with FAD. NAD(+) is bound at residue 146–174 (SVVIVGAGTIGLELAASATQRRCKVTVIE).

Belongs to the bacterial ring-hydroxylating dioxygenase ferredoxin reductase family. As to quaternary structure, this dioxygenase system consists of four proteins: the two subunits of the hydroxylase component (HcaE and HcaF), a ferredoxin (HcaC) and a ferredoxin reductase (HcaD). FAD is required as a cofactor.

The enzyme catalyses 2 reduced [2Fe-2S]-[ferredoxin] + NAD(+) + H(+) = 2 oxidized [2Fe-2S]-[ferredoxin] + NADH. Its pathway is aromatic compound metabolism; 3-phenylpropanoate degradation. In terms of biological role, part of the multicomponent 3-phenylpropionate dioxygenase, that converts 3-phenylpropionic acid (PP) and cinnamic acid (CI) into 3-phenylpropionate-dihydrodiol (PP-dihydrodiol) and cinnamic acid-dihydrodiol (CI-dihydrodiol), respectively. This chain is 3-phenylpropionate/cinnamic acid dioxygenase ferredoxin--NAD(+) reductase component, found in Escherichia coli O157:H7.